Reading from the N-terminus, the 443-residue chain is Methyl-coenzyme M reductase I subunit beta (443 aa).

A coenzyme M-binding site is contributed by Tyr367. Coenzyme B is bound at residue Gly369.

The protein belongs to the methyl-coenzyme M reductase beta subunit family. As to quaternary structure, MCR is a hexamer of two alpha, two beta, and two gamma chains, forming a dimer of heterotrimers. Coenzyme F430 serves as cofactor.

It localises to the cytoplasm. It catalyses the reaction coenzyme B + methyl-coenzyme M = methane + coenzyme M-coenzyme B heterodisulfide. It participates in one-carbon metabolism; methyl-coenzyme M reduction; methane from methyl-coenzyme M: step 1/1. Functionally, component of the methyl-coenzyme M reductase (MCR) I that catalyzes the reductive cleavage of methyl-coenzyme M (CoM-S-CH3 or 2-(methylthio)ethanesulfonate) using coenzyme B (CoB or 7-mercaptoheptanoylthreonine phosphate) as reductant which results in the production of methane and the mixed heterodisulfide of CoB and CoM (CoM-S-S-CoB). This is the final step in methanogenesis. In Methanothermobacter thermautotrophicus (strain ATCC 29096 / DSM 1053 / JCM 10044 / NBRC 100330 / Delta H) (Methanobacterium thermoautotrophicum), this protein is Methyl-coenzyme M reductase I subunit beta (mcrB).